Here is a 205-residue protein sequence, read N- to C-terminus: Holliday junction branch migration complex subunit RuvA (205 aa).

The domain I stretch occupies residues 1-67 (MIGWLKGDVQ…ADNLQLFGFL (67 aa)). The interval 68-146 (QLAERDLFRE…DSVASTGPER (79 aa)) is domain II. Residues 147-155 (NQLDPVAPD) are flexible linker. Residues 155–205 (DLIATLETLGFETHEIRDALQRLNGMGGPQDGDDDDAWLRACIKLMSSTDP) are domain III.

The protein belongs to the RuvA family. In terms of assembly, homotetramer. Forms an RuvA(8)-RuvB(12)-Holliday junction (HJ) complex. HJ DNA is sandwiched between 2 RuvA tetramers; dsDNA enters through RuvA and exits via RuvB. An RuvB hexamer assembles on each DNA strand where it exits the tetramer. Each RuvB hexamer is contacted by two RuvA subunits (via domain III) on 2 adjacent RuvB subunits; this complex drives branch migration. In the full resolvosome a probable DNA-RuvA(4)-RuvB(12)-RuvC(2) complex forms which resolves the HJ.

It localises to the cytoplasm. The RuvA-RuvB-RuvC complex processes Holliday junction (HJ) DNA during genetic recombination and DNA repair, while the RuvA-RuvB complex plays an important role in the rescue of blocked DNA replication forks via replication fork reversal (RFR). RuvA specifically binds to HJ cruciform DNA, conferring on it an open structure. The RuvB hexamer acts as an ATP-dependent pump, pulling dsDNA into and through the RuvAB complex. HJ branch migration allows RuvC to scan DNA until it finds its consensus sequence, where it cleaves and resolves the cruciform DNA. In Parasynechococcus marenigrum (strain WH8102), this protein is Holliday junction branch migration complex subunit RuvA.